The primary structure comprises 49 residues: Defensin-like protein 1 (49 aa).

Disulfide bonds link Cys-3/Cys-49, Cys-14/Cys-35, Cys-20/Cys-43, and Cys-24/Cys-45.

This sequence belongs to the DEFL family.

The protein resides in the secreted. Possesses antimicrobial activity sensitive to inorganic cations. Binds specifically to the fungal plasma membrane. Has no inhibitory effect on insect gut alpha-amylase. The sequence is that of Defensin-like protein 1 from Clitoria ternatea (Butterfly pea).